Consider the following 253-residue polypeptide: Sortase SrtE2 (253 aa).

Over residues 1 to 11 (MAATTDTEHQE) the composition is skewed to basic and acidic residues. The tract at residues 1-23 (MAATTDTEHQEQAGTGGRGRRRP) is disordered. A helical membrane pass occupies residues 30-50 (AVSVLGELLITAGLVMGLFVV). Positions 69-89 (EKVRDDWAQDRVGGSGQDGPG) are disordered. Cys-220 is a catalytic residue.

Belongs to the bacterial sortase family. Class E subfamily.

It localises to the cell membrane. The enzyme catalyses The enzyme catalyzes a cell wall sorting reaction in which a surface protein with a sorting signal containing a LPXTG motif is cleaved between the Thr and Gly residue. The resulting threonine carboxyl end of the protein is covalently attached to a pentaglycine cross-bridge of peptidoglycan.. Transpeptidase that anchors surface proteins to the cell wall. Recognizes Leu-Ala-x-Thr-Gly and Leu-Pro-x-Thr-Gly, with a preference for the former. Unlike the S.aureus sortase it cleaves not only the Thr-Gly motif but also the Ala-X bond; an Ala-Glu bond is a better substrate than the Thr-Gly motif in vitro. Among its possible substrates are the chaplins ChpA, ChpB and ChpC; this enzyme is more important for ChpC attachment than is SrtE1. A double knockout mutant of srtE1 and srtE2 shows a developmental defect in aerial hyphae formation more dramatic than that due to chaplin deletion. In Streptomyces coelicolor (strain ATCC BAA-471 / A3(2) / M145), this protein is Sortase SrtE2.